A 1120-amino-acid chain; its full sequence is MLQQKFPATAKCFFAIDNFTKHLNQDFILSVNNEEEALKLYKQAFFFSSNENIYYFPSYDTIPYDYTSPNTNIISRRAETLTKLITNNNSKLLITHAANLLNKLPPKDFFSKYFLKLYPKIKFTIDELSMLLVENSFTRNISSNDVGEFSVRGEIIDIILPGPKAYRINFSWDYIESIKEFDINTQISTKYCTELVISPVSEIVLNSKTIGNFKNNYLRNFGVNHTDNPLYEAVISGRKFPGYEQLLPLFYDSCSSLVDYLNDPICIFDNLSKQEILEFENSCNDFYLARSNANKLKVNNFYPALSPASLYFTASAITELLEQKNNILISYENSEQASLIGNISSTSFMEKKTIFDKLFELIKANFHKKIIICSSVLSSFERIKSIIQNYKYTFNEINKLDDAKASVINIGIIPLNQSFYTKEYLFITSSELLEEKTLYTNTNKKLKNILLELDNLAEGEFVVHKDHGIGQFLKLEAFEIQGKLHDFLKILYSGNDKLYVPVENIEVIKKYGSNNVELDKLGSAAWHKSKAKLKDRIKEISLHLIQIAAKRKLNISTPIEFDLEEYDKFCANFPFIETEDQLTAINDIRKDLTNGMLMDRLICGDVGFGKTEVAMRAVFMVAKSLNEYLPQVAVVVPTTILCSQHFSRFIERFKGFGLNIKQLSSVVSSQEANIIRLELASGKINIIIGTHTLLHKNIKFFNLKLLIIDEEQHFGVSQKEFLKSLKYSSHVLAMSATPIPRTLQMSLTGLKELSIIATPPLNRLEVRTSVMPFDTVIIRDALLREHFRGGRSFYVVPRIKDMEDIEKQLKQIVPELSYKIAHGKMTPSKIDEVMSEFYAGKFDILISTTIIESGIDITEANTMIIHNADTLGLSQLYQLRGRIGRGKIRGYAYLTVASNKKLMQHSLRRLEIIQNSCALGSGFTIASHDADLRGFGNLIGEEQSGQIREVGAELYQEMLEEQIALLKDESIVSEQSFIPNINLGLSVFIPDHYVSDSALKIALYRRIGNLSNEIEVEKFKDEMIDRFGLLPIEFNNLLDIVKIKLLCFKLNIENLDSGDDGFVIRFYKNADMSDKILKFVSRYSNQTKIKPNNKLVFIKKLVDKNIITEANQLLWTLLEI.

The Helicase ATP-binding domain occupies 591–756 (DLTNGMLMDR…LTGLKELSII (166 aa)). Residue 604–611 (GDVGFGKT) coordinates ATP. The DEEQ box motif lies at 709–712 (DEEQ). In terms of domain architecture, Helicase C-terminal spans 777–933 (IIRDALLREH…TIASHDADLR (157 aa)).

It in the N-terminal section; belongs to the UvrB family. This sequence in the C-terminal section; belongs to the helicase family. RecG subfamily.

The protein resides in the cytoplasm. Couples transcription and DNA repair by recognizing RNA polymerase (RNAP) stalled at DNA lesions. Mediates ATP-dependent release of RNAP and its truncated transcript from the DNA, and recruitment of nucleotide excision repair machinery to the damaged site. This chain is Transcription-repair-coupling factor, found in Rickettsia typhi (strain ATCC VR-144 / Wilmington).